We begin with the raw amino-acid sequence, 774 residues long: MAHEAMEYDVQVQLNHAEQQPAPAGMASSQGGPALLQPVPADVVSSQGVPSILQPAPAEVISSQATPPLLQPAPQLSVDLTEVEVLGEDTVENINPRTSEQHRQGSDGNHTIPASSLHSMTNFISGLQRLHGMLEFLRPSSSNHSVGPMRTRRRVSASRRARAGGSQRTDSARLRAPLDAYFQVSRTQPDLPATTYDSETRNPVSEELQVSSSSDSDSDSSAEYGGVVDQAEESGAVILEEQLAGVSAEQEVTCIDGGKTLPKQPSPQKSEPLLPSASMDEEEGDTCTICLEQWTNAGDHRLSALRCGHLFGYRCISTWLKGQVRKCPQCNKKARHSDIVVLYARTLRALDTSEQERMKSSLLKEQMLRKQAELESAQCRLQLQVLTDKCTRLQRRVQDLQKLTSHQSQNLQQPRGSQAWVLSCSPSSQGQHKHKYHFQKTFTVSQAGNCRIMAYCDALSCLVISQPSPQASFLPGFGVKMLSTANMKSSQYIPMHGKQIRGLAFSSYLRGLLLSASLDNTIKLTSLETNTVVQTYNAGRPVWSCCWCLDEANYIYAGLANGSILVYDVRNTSSHVQELVAQKARCPLVSLSYMPRAASAAFPYGGVLAGTLEDASFWEQKMDFSHWPHVLPLEPGGCIDFQTENSSRHCLVTYRPDKNHTTIRSVLMEMSYRLDDTGNPICSCQPVHTFFGGPTCKLLTKNAIFQSPENDGNILVCTGDEAANSALLWDAASGSLLQDLQTDQPVLDICPFEVNRNSYLATLTEKMVHIYKWE.

Serine 46 and serine 63 each carry phosphoserine; by ATM and ATR. 3 disordered regions span residues 95 to 116 (NPRT…PASS), 139 to 225 (PSSS…AEYG), and 257 to 280 (GGKT…ASMD). Polar residues predominate over residues 106–116 (SDGNHTIPASS). Residues 150-162 (RTRRRVSASRRAR) show a composition bias toward basic residues. Residues 211–221 (SSSSDSDSDSS) show a composition bias toward low complexity. Residues 287-331 (CTICLEQWTNAGDHRLSALRCGHLFGYRCISTWLKGQVRKCPQCN) form an RING-type; degenerate zinc finger. Residues 361-413 (SLLKEQMLRKQAELESAQCRLQLQVLTDKCTRLQRRVQDLQKLTSHQSQNLQQ) are a coiled coil. WD repeat units follow at residues 495 to 537 (MHGK…QTYN), 539 to 577 (GRPV…SHVQ), and 583 to 628 (KARC…SHWP).

In terms of assembly, interacts with MDM2 and p53/TP53. Binds to the RPA complex via direct interaction with RPA2. Interacts with RAD51. Post-translationally, phosphorylated at Ser-46 and Ser-63 upon DNA damage by ATM or ATR. ATM phosphorylation occurs at early times upon DNA damage, while ATR is the major kinase at later times. Phosphorylation by ATM and ATR is required to stabilize p53/TP53. Part of the phosphorylation depends upon RPA2 presence.

It localises to the nucleus. It is found in the PML body. Its subcellular location is the cytoplasm. The catalysed reaction is S-ubiquitinyl-[E2 ubiquitin-conjugating enzyme]-L-cysteine + [acceptor protein]-L-lysine = [E2 ubiquitin-conjugating enzyme]-L-cysteine + N(6)-ubiquitinyl-[acceptor protein]-L-lysine.. It functions in the pathway protein modification; protein ubiquitination. Its function is as follows. E3 ubiquitin-protein ligase required for the repair of DNA interstrand cross-links (ICL) in response to DNA damage. Plays a key role in RPA-mediated DNA damage signaling and repair. Acts by mediating ubiquitination of the RPA complex (RPA1, RPA2 and RPA3 subunits) and RAD51 at stalled replication forks, leading to remove them from DNA damage sites and promote homologous recombination. Also mediates the ubiquitination of p53/TP53 in the late response to DNA damage, and acts as a positive regulator of p53/TP53 stability, thereby regulating the G1/S DNA damage checkpoint. May act by catalyzing the formation of short polyubiquitin chains on p53/TP53 that are not targeted to the proteasome. In response to ionizing radiation, interacts with MDM2 and enhances p53/TP53 ubiquitination, possibly by restricting MDM2 from extending polyubiquitin chains on ubiquitinated p53/TP53. Required to translesion DNA synthesis across DNA-protein cross-link adducts by catalyzing ubiquitination of proteins on single-stranded DNA (ssDNA). This Homo sapiens (Human) protein is E3 ubiquitin-protein ligase RFWD3.